Consider the following 310-residue polypeptide: tRNA-cytidine(32) 2-sulfurtransferase (310 aa).

Residues 48–53 (SGGKDS) carry the PP-loop motif motif. [4Fe-4S] cluster is bound by residues cysteine 123, cysteine 126, and cysteine 214.

The protein belongs to the TtcA family. In terms of assembly, homodimer. Mg(2+) is required as a cofactor. [4Fe-4S] cluster serves as cofactor.

It localises to the cytoplasm. The catalysed reaction is cytidine(32) in tRNA + S-sulfanyl-L-cysteinyl-[cysteine desulfurase] + AH2 + ATP = 2-thiocytidine(32) in tRNA + L-cysteinyl-[cysteine desulfurase] + A + AMP + diphosphate + H(+). It participates in tRNA modification. In terms of biological role, catalyzes the ATP-dependent 2-thiolation of cytidine in position 32 of tRNA, to form 2-thiocytidine (s(2)C32). The sulfur atoms are provided by the cysteine/cysteine desulfurase (IscS) system. This is tRNA-cytidine(32) 2-sulfurtransferase from Vibrio vulnificus (strain YJ016).